The primary structure comprises 432 residues: Glutamyl-tRNA reductase (432 aa).

Substrate-binding positions include 49 to 52, Ser-101, 106 to 108, and Gln-112; these read TCNR and EPQ. Residue Cys-50 is the Nucleophile of the active site. Position 181 to 186 (181 to 186) interacts with NADP(+); the sequence is GAGETI. The tract at residues 408-432 is disordered; the sequence is PEKPGYRHPPVATPIVRTDDANPAP.

It belongs to the glutamyl-tRNA reductase family. In terms of assembly, homodimer.

It catalyses the reaction (S)-4-amino-5-oxopentanoate + tRNA(Glu) + NADP(+) = L-glutamyl-tRNA(Glu) + NADPH + H(+). The protein operates within porphyrin-containing compound metabolism; protoporphyrin-IX biosynthesis; 5-aminolevulinate from L-glutamyl-tRNA(Glu): step 1/2. Functionally, catalyzes the NADPH-dependent reduction of glutamyl-tRNA(Glu) to glutamate 1-semialdehyde (GSA). This chain is Glutamyl-tRNA reductase, found in Xanthomonas campestris pv. campestris (strain 8004).